The sequence spans 378 residues: MLLKNASFYDDEVLKRADIRLKDSLITEIKENLSPINNEEVIECRDLFVLPSFIDLSVTGLEGYENLKQKAFKGGVGLLNVFNCDQSGIKNIMAIKNNQLADIATLKNKGGEILIAPSDAFLELISHYAKSYNLPLLISLENSFEALNSGELAYELGQNFVENAFENTRLVRFMEVSRALQIPVLLDKVNSITTLKLIKAFNDLGAKLQAQTPLSHLVLDESVYEDYEPRFKIAPPLRDKESQNALKEALKNNEIAMLTSLHASKNSNAQLFEESAFGCESIEDAFSVAYTFLVQKKVISFQQLIKVMAINQAKFLKLNAGEVKENQLANLMIVDLNAQTRVSNQNSPFYGLELYGEVQRMILKGQTTFIKENACKKS.

It belongs to the metallo-dependent hydrolases superfamily. DHOase family. PyrC' subfamily.

Functionally, non-functional DHOase. The sequence is that of Probable dihydroorotase-like protein (pyrC') from Helicobacter pylori (strain ATCC 700392 / 26695) (Campylobacter pylori).